The following is an 87-amino-acid chain: Putative outer membrane protein ArbH (87 aa).

The N-terminal stretch at 1 to 23 (MKIKNSYLVIASLLYPISFISTA) is a signal peptide.

The protein belongs to the porin LamB (TC 1.B.3) family.

The protein resides in the cell outer membrane. In terms of biological role, may be a sugar porin with a broad carbohydrate specificity. This Dickeya chrysanthemi (Pectobacterium chrysanthemi) protein is Putative outer membrane protein ArbH (arbH).